The primary structure comprises 679 residues: MSKQDLLLEIGLEEMPARFLNESMVQLGDKLTGWLKEKNITHGEVKLFNTPRRLAVFVKDVAEKQDDIKEEAKGPAKKIALDADGNWTKAAIGFSKGQGANVEDLYIKEVKGIEYVFVQKFQAGQETKSLLPELSGLITSLHFPKNMRWGNEDLRYIRPIKWIVALFGQDVIPFSITNVESGRTTQGHRFLGHEVSIESPSAYEEQLKGQHVIADPSVRKQMIQSQLETMAAENNWSIPVDEDLLDEVNHLVEYPTALYGSFESEFLSIPEEVLVTTMKEHQRYFPVKDKNGDLLPHFITVRNGNSHAIENVARGNEKVLRARLSDASFFYKEDQKLNIDANVKKLENIVFHEELGSLADKVRRVTSIAEKLAVRLQADEDTLKHVKRAAEISKFDLVTHMIYEFPELQGIMGEKYARMLGEDEAVAAAVNEHYMPRSAGGETPSTFTGAVVAMADKLDTIASFFSIGVIPTGSQDPYGLRRQASGIVAILLDRNWGISFEELLTFVQTDKENELLDFFTQRLKYVLNAEQIRHDVIDAVLESSELEPYSALHKAQVLEQKLGAPGFKETAEALGRVISISKKGVRGDIQPDLFENEYEAKLFDAYQTAKQNLQENFSKKDYEAALASLAALKEPIDAYFDHTMVIADNESLKANRLAQMVSLADEIKSFANMNALIVK.

It belongs to the class-II aminoacyl-tRNA synthetase family. As to quaternary structure, tetramer of two alpha and two beta subunits.

The protein resides in the cytoplasm. The catalysed reaction is tRNA(Gly) + glycine + ATP = glycyl-tRNA(Gly) + AMP + diphosphate. This Bacillus subtilis (strain 168) protein is Glycine--tRNA ligase beta subunit (glyS).